The sequence spans 150 residues: Large ribosomal subunit protein uL13 (150 aa).

The segment at A129–Q150 is disordered.

Belongs to the universal ribosomal protein uL13 family. Part of the 50S ribosomal subunit.

Its function is as follows. This protein is one of the early assembly proteins of the 50S ribosomal subunit, although it is not seen to bind rRNA by itself. It is important during the early stages of 50S assembly. In Synechococcus sp. (strain WH7803), this protein is Large ribosomal subunit protein uL13.